We begin with the raw amino-acid sequence, 312 residues long: Ribosomal protein L11 methyltransferase (312 aa).

Residues Thr-162, Gly-183, Asp-205, and Asn-248 each coordinate S-adenosyl-L-methionine.

The protein belongs to the methyltransferase superfamily. PrmA family.

The protein resides in the cytoplasm. It carries out the reaction L-lysyl-[protein] + 3 S-adenosyl-L-methionine = N(6),N(6),N(6)-trimethyl-L-lysyl-[protein] + 3 S-adenosyl-L-homocysteine + 3 H(+). In terms of biological role, methylates ribosomal protein L11. This is Ribosomal protein L11 methyltransferase from Bacillus cereus (strain B4264).